We begin with the raw amino-acid sequence, 328 residues long: Malate dehydrogenase (328 aa).

Residue 12 to 18 participates in NAD(+) binding; that stretch reads GAAGQIG. Substrate contacts are provided by Arg95 and Arg101. NAD(+)-binding positions include Asn108, Gln115, and 132-134; that span reads VGN. Asn134 and Arg165 together coordinate substrate. Catalysis depends on His190, which acts as the Proton acceptor.

Belongs to the LDH/MDH superfamily. MDH type 2 family.

The catalysed reaction is (S)-malate + NAD(+) = oxaloacetate + NADH + H(+). Catalyzes the reversible oxidation of malate to oxaloacetate. The polypeptide is Malate dehydrogenase (Variovorax paradoxus (strain S110)).